The chain runs to 264 residues: Glyceraldehyde-3-phosphate dehydrogenase (264 aa).

Residues Arg-45 and Thr-93 each contribute to the NAD(+) site. Residues 123-125 (SCT) and Thr-154 contribute to the D-glyceraldehyde 3-phosphate site. Cys-124 functions as the Nucleophile in the catalytic mechanism. NAD(+) is bound at residue Asn-155. D-glyceraldehyde 3-phosphate-binding positions include Arg-169, 182-183 (TG), and Arg-205. The segment at 245–264 (GILGYTEDPXVSSDXKGNSH) is disordered.

Belongs to the glyceraldehyde-3-phosphate dehydrogenase family. In terms of assembly, homotetramer.

It is found in the cytoplasm. It carries out the reaction D-glyceraldehyde 3-phosphate + phosphate + NAD(+) = (2R)-3-phospho-glyceroyl phosphate + NADH + H(+). The protein operates within carbohydrate degradation; glycolysis; pyruvate from D-glyceraldehyde 3-phosphate: step 1/5. Catalyzes the oxidative phosphorylation of glyceraldehyde 3-phosphate (G3P) to 1,3-bisphosphoglycerate (BPG) using the cofactor NAD. The first reaction step involves the formation of a hemiacetal intermediate between G3P and a cysteine residue, and this hemiacetal intermediate is then oxidized to a thioester, with concomitant reduction of NAD to NADH. The reduced NADH is then exchanged with the second NAD, and the thioester is attacked by a nucleophilic inorganic phosphate to produce BPG. The polypeptide is Glyceraldehyde-3-phosphate dehydrogenase (gap) (Borrelia hermsii).